The following is a 232-amino-acid chain: Multiple organellar RNA editing factor 6, mitochondrial (232 aa).

The N-terminal 67 residues, 1-67 (MAKTLSRSTA…TIRTRMDRSG (67 aa)), are a transit peptide targeting the mitochondrion. The interval 208 to 232 (TNQRGSDKPKYHDRIRNVRRRENMR) is disordered. Residues 212 to 232 (GSDKPKYHDRIRNVRRRENMR) are compositionally biased toward basic and acidic residues.

The protein belongs to the MORF family. As to quaternary structure, heterodimers with MORF8/RIP1, MORF3/RIP3, MORF6/RIP6, MORF7/RIP7 and MORF9/RIP9.

It localises to the mitochondrion. Functionally, involved in organellar RNA editing. Required for the processing of few RNA editing sites in mitochondria. In Arabidopsis thaliana (Mouse-ear cress), this protein is Multiple organellar RNA editing factor 6, mitochondrial.